The chain runs to 166 residues: Large ribosomal subunit protein bL19 (166 aa).

This sequence belongs to the bacterial ribosomal protein bL19 family. As to quaternary structure, part of the 50S ribosomal subunit. Forms a cluster with proteins L3 and L14.

This protein is located at the 30S-50S ribosomal subunit interface and may play a role in the structure and function of the aminoacyl-tRNA binding site. Binds the 23S rRNA. The polypeptide is Large ribosomal subunit protein bL19 (rplS) (Deinococcus radiodurans (strain ATCC 13939 / DSM 20539 / JCM 16871 / CCUG 27074 / LMG 4051 / NBRC 15346 / NCIMB 9279 / VKM B-1422 / R1)).